The following is a 125-amino-acid chain: Fluoride-specific ion channel FluC (125 aa).

4 helical membrane passes run 5 to 25 (IFLV…VSLL), 33 to 53 (IFPL…GILV), 66 to 86 (VKIF…SFSL), and 100 to 120 (LVLY…LGYI). 2 residues coordinate Na(+): Gly76 and Thr79.

It belongs to the fluoride channel Fluc/FEX (TC 1.A.43) family.

It localises to the cell inner membrane. It catalyses the reaction fluoride(in) = fluoride(out). Na(+) is not transported, but it plays an essential structural role and its presence is essential for fluoride channel function. Functionally, fluoride-specific ion channel. Important for reducing fluoride concentration in the cell, thus reducing its toxicity. This chain is Fluoride-specific ion channel FluC, found in Azobacteroides pseudotrichonymphae genomovar. CFP2.